The following is a 376-amino-acid chain: MKIVADENMPYVEALFADLGEVVMVDGRTLTQAQVKDADVLLVRSVTKVNKSLLDGCDRLSFVGSATIGMDHLDLDYLKQRGIFCTNAPGCNAVAVGEYAFNAMLELARRFHNPLKGKTVGIVGAGNTGTALQKCLEAYGVKTLLNDPLLEQSGDEREFVSLDELIERCDVISLHVPLTRDGEHPTHYLFDKRRLNALAEDTWLLNCCRGEVIDNRALIEVKQQRSDLKLVLDVWEGEPLPMPELVPLVEVATPHIAGYSLEGKARGTFMLYQALMAQLGRAVDKSLASLLPPLWSHQLSPLSVPDEKALLCLVRLVYDLRDDDELFRQRFQNNKGFDLMRKNHKHRREFSALMLANTAGSDVDWLLELGFSGVGL.

Positions 45 and 67 each coordinate substrate. NAD(+) is bound at residue aspartate 147. Arginine 209 is a catalytic residue. An NAD(+)-binding site is contributed by aspartate 233. Glutamate 238 is an active-site residue. Catalysis depends on histidine 255, which acts as the Proton donor. Glycine 258 is an NAD(+) binding site. A substrate-binding site is contributed by tyrosine 259.

This sequence belongs to the D-isomer specific 2-hydroxyacid dehydrogenase family. PdxB subfamily. As to quaternary structure, homodimer.

It is found in the cytoplasm. The catalysed reaction is 4-phospho-D-erythronate + NAD(+) = (R)-3-hydroxy-2-oxo-4-phosphooxybutanoate + NADH + H(+). Its pathway is cofactor biosynthesis; pyridoxine 5'-phosphate biosynthesis; pyridoxine 5'-phosphate from D-erythrose 4-phosphate: step 2/5. Functionally, catalyzes the oxidation of erythronate-4-phosphate to 3-hydroxy-2-oxo-4-phosphonooxybutanoate. In Shewanella loihica (strain ATCC BAA-1088 / PV-4), this protein is Erythronate-4-phosphate dehydrogenase.